Reading from the N-terminus, the 123-residue chain is Small ribosomal subunit protein uS12 (123 aa).

The disordered stretch occupies residues 1-21 (MPTIEQLVRKGRQAKPKKSKT). The span at 9-20 (RKGRQAKPKKSK) shows a compositional bias: basic residues.

Belongs to the universal ribosomal protein uS12 family. In terms of assembly, part of the 30S ribosomal subunit. Contacts proteins S8 and S17. May interact with IF1 in the 30S initiation complex.

Functionally, with S4 and S5 plays an important role in translational accuracy. In terms of biological role, interacts with and stabilizes bases of the 16S rRNA that are involved in tRNA selection in the A site and with the mRNA backbone. Located at the interface of the 30S and 50S subunits, it traverses the body of the 30S subunit contacting proteins on the other side and probably holding the rRNA structure together. The combined cluster of proteins S8, S12 and S17 appears to hold together the shoulder and platform of the 30S subunit. The chain is Small ribosomal subunit protein uS12 from Bifidobacterium longum (strain NCC 2705).